The sequence spans 424 residues: Histidine--tRNA ligase (424 aa).

It belongs to the class-II aminoacyl-tRNA synthetase family. As to quaternary structure, homodimer.

It localises to the cytoplasm. The catalysed reaction is tRNA(His) + L-histidine + ATP = L-histidyl-tRNA(His) + AMP + diphosphate + H(+). This is Histidine--tRNA ligase from Shewanella denitrificans (strain OS217 / ATCC BAA-1090 / DSM 15013).